Consider the following 206-residue polypeptide: Large ribosomal subunit protein eL13z (206 aa).

The interval 185–206 is disordered; the sequence is TNKRHAGARAKRAAEAEKEEKK. The segment covering 186 to 195 has biased composition (basic residues); that stretch reads NKRHAGARAK. The segment covering 196–206 has biased composition (basic and acidic residues); that stretch reads RAAEAEKEEKK.

It belongs to the eukaryotic ribosomal protein eL13 family.

The protein localises to the cytoplasm. The polypeptide is Large ribosomal subunit protein eL13z (RPL13B) (Arabidopsis thaliana (Mouse-ear cress)).